A 270-amino-acid chain; its full sequence is UPF0354 protein BcerKBAB4_4524 (270 aa).

The protein belongs to the UPF0354 family.

This Bacillus mycoides (strain KBAB4) (Bacillus weihenstephanensis) protein is UPF0354 protein BcerKBAB4_4524.